Consider the following 464-residue polypeptide: Growth hormone-releasing hormone receptor (464 aa).

A signal peptide spans 1 to 22 (MDSLLWATWVLCLLNLWGVALG). The Extracellular portion of the chain corresponds to 23 to 130 (HLHLECDFIT…EEKSYFSTVK (108 aa)). Cystine bridges form between Cys41–Cys64, Cys55–Cys96, and Cys78–Cys112. Asn50 carries an N-linked (GlcNAc...) asparagine glycan. Residues 131-151 (IIYTTGHSISIVALCVAIAIL) traverse the membrane as a helical segment. Topologically, residues 152 to 167 (VALRRLHCPRNYIHTQ) are cytoplasmic. The chain crosses the membrane as a helical span at residues 168-188 (LFATFILKASAVFLKDAAVFQ). The Extracellular segment spans residues 189–210 (GDSTDHCSMSTILCKVSVAVSH). A helical membrane pass occupies residues 211–231 (FATMTNFSWLLAEAVYLSCLL). The Cytoplasmic portion of the chain corresponds to 232-240 (ASTSPRSKP). The chain crosses the membrane as a helical span at residues 241 to 261 (AFWWLVLAGWGLPVLCTGTWV). The Extracellular portion of the chain corresponds to 262–283 (GCKLAFEDTACWDLDDSSPYWW). Residues 284–304 (IIKGPIVLSVGVNFGLFLNII) traverse the membrane as a helical segment. Over 305–372 (CILLRKLGPA…QLPWRLSKST (68 aa)) the chain is Cytoplasmic. The helical transmembrane segment at 373 to 393 (LLLIPLFGIHYIIFNFLPDSA) threads the bilayer. Residues 394–398 (GLGIR) are Extracellular-facing. Residues 399–419 (LPLELGLGSFQGFVVAVLYCF) form a helical membrane-spanning segment. At 420-464 (LNQEVRTEISRKWYGHDPELLPARRTCTEWTTPPRSRVKVLTSEC) the chain is on the cytoplasmic side.

This sequence belongs to the G-protein coupled receptor 2 family. Pituitary gland.

Its subcellular location is the cell membrane. Its function is as follows. Receptor for GRF, coupled to G proteins which activate adenylyl cyclase. Stimulates somatotroph cell growth, growth hormone gene transcription and growth hormone secretion. This is Growth hormone-releasing hormone receptor (Ghrhr) from Rattus norvegicus (Rat).